A 513-amino-acid chain; its full sequence is Glycogen synthase (513 aa).

K47 provides a ligand contact to ADP-alpha-D-glucose.

This sequence belongs to the glycosyltransferase 1 family. Bacterial/plant glycogen synthase subfamily.

It carries out the reaction [(1-&gt;4)-alpha-D-glucosyl](n) + ADP-alpha-D-glucose = [(1-&gt;4)-alpha-D-glucosyl](n+1) + ADP + H(+). It functions in the pathway glycan biosynthesis; glycogen biosynthesis. Functionally, synthesizes alpha-1,4-glucan chains using ADP-glucose. This Pseudomonas paraeruginosa (strain DSM 24068 / PA7) (Pseudomonas aeruginosa (strain PA7)) protein is Glycogen synthase.